We begin with the raw amino-acid sequence, 114 residues long: Ribonuclease P protein component (114 aa).

It belongs to the RnpA family. In terms of assembly, consists of a catalytic RNA component (M1 or rnpB) and a protein subunit.

It catalyses the reaction Endonucleolytic cleavage of RNA, removing 5'-extranucleotides from tRNA precursor.. Functionally, RNaseP catalyzes the removal of the 5'-leader sequence from pre-tRNA to produce the mature 5'-terminus. It can also cleave other RNA substrates such as 4.5S RNA. The protein component plays an auxiliary but essential role in vivo by binding to the 5'-leader sequence and broadening the substrate specificity of the ribozyme. The chain is Ribonuclease P protein component from Buchnera aphidicola subsp. Baizongia pistaciae (strain Bp).